Reading from the N-terminus, the 1048-residue chain is Integrin alpha-V (1048 aa).

A signal peptide spans 1–30 (MAFPPRRRLRLGPRGLPLLLSGLLLPLCRA). Topologically, residues 31–992 (FNLDVESPAE…WGIQPAPMPV (962 aa)) are extracellular. 7 FG-GAP repeats span residues 32-98 (NLDV…RRCQ), 109-170 (DYAK…VEYA), 173-225 (RSKN…VSKY), 237-291 (QLAT…GKNM), 292-357 (SSLH…GDFQ), 358-415 (TIKL…GLNA), and 419-482 (QILE…VYPS). Asn74 carries N-linked (GlcNAc...) asparagine glycosylation. Disulfide bonds link Cys89–Cys97, Cys138–Cys158, and Cys172–Cys185. Positions 260, 262, 264, 266, and 268 each coordinate Ca(2+). N-linked (GlcNAc...) asparagine glycans are attached at residues Asn290 and Asn296. Ca(2+) is bound by residues Asp314, Asn316, Asp318, Tyr320, Asp322, Asp379, Asp381, Asp383, Phe385, Asp387, Asp443, Asp445, Asn447, Tyr449, and Asp451. Asn488 carries N-linked (GlcNAc...) asparagine glycosylation. Intrachain disulfides connect Cys491-Cys502 and Cys508-Cys565. Asn554 and Asn615 each carry an N-linked (GlcNAc...) asparagine glycan. Disulfide bonds link Cys626–Cys632 and Cys698–Cys711. Residues Asn704, Asn835, Asn851, and Asn874 are each glycosylated (N-linked (GlcNAc...) asparagine). 2 disulfides stabilise this stretch: Cys852-Cys914 and Cys904-Cys909. Residues Asn945, Asn973, and Asn980 are each glycosylated (N-linked (GlcNAc...) asparagine). A helical transmembrane segment spans residues 993–1016 (PVWVIILAVLAGLLLLAVLVFVMY). Topologically, residues 1017 to 1048 (RMGFFKRVRPPQEEQEREQLQPHENGEGNSET) are cytoplasmic. Positions 1019–1023 (GFFKR) match the GFFKR motif motif. Over residues 1027-1042 (PQEEQEREQLQPHENG) the composition is skewed to basic and acidic residues. A disordered region spans residues 1027-1048 (PQEEQEREQLQPHENGEGNSET).

This sequence belongs to the integrin alpha chain family. As to quaternary structure, heterodimer of an alpha and a beta subunit. The alpha subunit is composed of a heavy and a light chain linked by a disulfide bond. Alpha-V (ITGAV) associates with either beta-1 (ITGB1), beta-3 (ITGB3), beta-5 (ITGB5), beta-6 (ITGB6) or beta-8 (ITGB8). Interacts with RAB25. Interacts with CIB1. Integrins ITGAV:ITGB3 and ITGAV:ITGB5 interact with FBLN5 (via N-terminus). ITGAV:ITGB3 and ITGAV:ITGB5 interact with CCN3. ITGAV:ITGB3 interacts with ADGRA2. ITGAV:ITGB3 interacts with FGF2; it is likely that FGF2 can simultaneously bind ITGAV:ITGB3 and FGF receptors. ITGAV:ITGB3 interacts with SELP (via C-type lectin domain); the interaction mediates cell-cell interaction and adhesion. ITGAV:ITGB3 is found in a ternary complex with CX3CR1 and CX3CL1. ITGAV:ITGB3 is found in a ternary complex with NRG1 and ERBB3. ITGAV:ITGB3 is found in a ternary complex with FGF1 and FGFR1. ITGAV:ITGB3 is found in a ternary complex with IGF1 and IGF1R. ITGAV:ITGB3 interacts with IGF2. ITGAV:ITGB3 and ITGAV:ITGB6 interact with FBN1. ITGAV:ITGB3 interacts with CD9, CD81 and CD151 (via second extracellular domain). ITGAV:ITGB6 interacts with TGFB1. ITGAV:ITGB3 interacts with PTN. Forms a complex with PTPRZ1 and PTN that stimulates endothelial cell migration through ITGB3 'Tyr-773' phosphorylation. Interacts with TM4SF19. (Microbial infection) Alpha-V/beta-6 and alpha-V/beta-3 bind to foot-and-mouth disease virus (FMDV) VP1 protein and acts as a receptor for this virus.

It is found in the cell membrane. The protein localises to the cell junction. Its subcellular location is the focal adhesion. The alpha-V (ITGAV) integrins are receptors for vitronectin, cytotactin, fibronectin, fibrinogen, laminin, matrix metalloproteinase-2, osteopontin, osteomodulin, prothrombin, thrombospondin, TGFB1 and vWF. They recognize the sequence R-G-D in a wide array of ligands. Alpha-V integrins may play a role in embryo implantation, angiogenesis and wound healing. ITGAV:ITGB3 binds to fractalkine (CX3CL1) and may act as its coreceptor in CX3CR1-dependent fractalkine signaling. ITGAV:ITGB3 binds to NRG1 (via EGF domain) and this binding is essential for NRG1-ERBB signaling. ITGAV:ITGB3 binds to FGF1 and this binding is essential for FGF1 signaling. ITGAV:ITGB3 binds to FGF2 and this binding is essential for FGF2 signaling. ITGAV:ITGB3 binds to IGF1 and this binding is essential for IGF1 signaling. ITGAV:ITGB3 binds to IGF2 and this binding is essential for IGF2 signaling. ITGAV:ITGB3 binds to IL1B and this binding is essential for IL1B signaling. ITGAV:ITGB3 binds to PLA2G2A via a site (site 2) which is distinct from the classical ligand-binding site (site 1) and this induces integrin conformational changes and enhanced ligand binding to site 1. ITGAV:ITGB3 and ITGAV:ITGB6 act as receptors for fibrillin-1 (FBN1) and mediate R-G-D-dependent cell adhesion to FBN1. Integrin alpha-V/beta-6 or alpha-V/beta-8 (ITGAV:ITGB6 or ITGAV:ITGB8) mediates R-G-D-dependent release of transforming growth factor beta-1 (TGF-beta-1) from regulatory Latency-associated peptide (LAP), thereby playing a key role in TGF-beta-1 activation. ITGAV:ITGB3 acts as a receptor for CD40LG. ITGAV:ITGB3 acts as a receptor for IBSP and promotes cell adhesion and migration to IBSP. The polypeptide is Integrin alpha-V (ITGAV) (Bos taurus (Bovine)).